Consider the following 141-residue polypeptide: uncharacterized protein (141 aa).

The protein localises to the cytoplasm. This is an uncharacterized protein from Homo sapiens (Human).